A 600-amino-acid chain; its full sequence is Elongation factor 4 (600 aa).

One can recognise a tr-type G domain in the interval 4 to 186 (KNVRNFCIIA…AIVNRIPPPK (183 aa)). GTP is bound by residues 16-21 (DHGKST) and 133-136 (NKID).

It belongs to the TRAFAC class translation factor GTPase superfamily. Classic translation factor GTPase family. LepA subfamily.

The protein localises to the cell inner membrane. The catalysed reaction is GTP + H2O = GDP + phosphate + H(+). Its function is as follows. Required for accurate and efficient protein synthesis under certain stress conditions. May act as a fidelity factor of the translation reaction, by catalyzing a one-codon backward translocation of tRNAs on improperly translocated ribosomes. Back-translocation proceeds from a post-translocation (POST) complex to a pre-translocation (PRE) complex, thus giving elongation factor G a second chance to translocate the tRNAs correctly. Binds to ribosomes in a GTP-dependent manner. The protein is Elongation factor 4 of Aquifex aeolicus (strain VF5).